The following is an 859-amino-acid chain: Alanine--tRNA ligase (859 aa).

Zn(2+) contacts are provided by His-562, His-566, Cys-664, and His-668.

Belongs to the class-II aminoacyl-tRNA synthetase family. Requires Zn(2+) as cofactor.

The protein resides in the cytoplasm. The catalysed reaction is tRNA(Ala) + L-alanine + ATP = L-alanyl-tRNA(Ala) + AMP + diphosphate. Functionally, catalyzes the attachment of alanine to tRNA(Ala) in a two-step reaction: alanine is first activated by ATP to form Ala-AMP and then transferred to the acceptor end of tRNA(Ala). Also edits incorrectly charged Ser-tRNA(Ala) and Gly-tRNA(Ala) via its editing domain. The chain is Alanine--tRNA ligase from Aliivibrio fischeri (strain ATCC 700601 / ES114) (Vibrio fischeri).